Reading from the N-terminus, the 558-residue chain is Protein shisa-7 (558 aa).

The N-terminal stretch at Met1 to Ala22 is a signal peptide. The Extracellular segment spans residues Arg23–Ala189. A glycan (N-linked (GlcNAc...) asparagine) is linked at Asn26. Disordered regions lie at residues Gly53–Pro79 and Thr142–Gly181. Positions Ala57 to Arg77 are enriched in low complexity. A compositionally biased stretch (gly residues) spans Gly148 to Gly181. A GRID region spans residues Gly154–Gly175. Residues Tyr190–Phe210 form a helical membrane-spanning segment. The Cytoplasmic portion of the chain corresponds to Ser211–Val558. A disordered region spans residues Gln236–Pro263. Ser438 is subject to Phosphoserine. A disordered region spans residues Arg443–Pro506. Over residues Pro453–Pro462 the composition is skewed to pro residues. Positions Ala466 to Leu477 are enriched in low complexity. At Thr532 the chain carries Phosphothreonine. The PDZ-binding motif lies at Glu555–Val558.

The protein belongs to the shisa family. Interacts with GABA(A)R (GABA type A receptor) subunits GABRA1, GABRA2 and GABRG2; the interaction is direct. Does not interact with GABRB2 and GABRB3 subunits. Interacts with AMPAR subunits GRIA1, GRIA2 and GRIA3 and AMPAR auxiliary proteins SHISA6 and SHISA7 in heterologous cells. Interacts (via PDZ-binding motif) with DLG4/PSD-95 (via PDZ domain)in heterologous cells; the interaction is direct. Post-translationally, N-glycosylated. As to expression, mainly expressed in neurons. Highly expressed in brain structures including cortex, striatum, olfactory bulb, amygdala hippocampus CA1-3 and dentate gyrus (at protein level).

Its subcellular location is the postsynaptic density membrane. In terms of biological role, transmembrane protein that regulates gamma-aminobutyric acid type A receptor (GABA(A)R) trafficking, channel deactivation kinetics and pharmacology, necessary for fast inhibitory transmission in the brain. Enhances the action of benzodiazepine, a primary GABA(A)Rs target drug, in the brain. May affect channel kinetics of AMPA-type glutamate receptors (AMPAR), the brain's main excitatory neurotransmitter, necessary for synaptic hippocampal plasticity, and memory recall. May regulate the induction and maintenance of long-term potentiation at Schaffer collaterals/CA3-CA1 excitatory synapses. This chain is Protein shisa-7, found in Mus musculus (Mouse).